A 258-amino-acid polypeptide reads, in one-letter code: MSQYRFPIRILTRFYTQASSRLPPKSLLIKQADRIRRSKDGQADGSKLMVSSLKDIASMFQANAETPEDEEREILNQQNYLRQQIESGELERLLQDKFNLDESISLMSTNLLVQQFPKLNAQQVELIQEAVSMDSNKHWNEIPQYMKQLQFYFAFGSHGPRLSIPFNSREKPLDFAFKIPSPVTTDGQTKIHKLKPSHLVNLHTITDQRSKIFQTTKLDPATRCILWSAILVSIVFGVQEWRLQQDPQAKITVLSNSV.

Residues 1–15 constitute a mitochondrion transit peptide; it reads MSQYRFPIRILTRFY. The chain crosses the membrane as a helical span at residues 221 to 238; sequence ATRCILWSAILVSIVFGV.

This sequence belongs to the GEP7 family.

It is found in the mitochondrion membrane. Functionally, involved in respiratory growth and required for cell survival in the absence of prohibitins. This is Genetic interactor of prohibitin 7, mitochondrial (GEP7) from Zygosaccharomyces rouxii (strain ATCC 2623 / CBS 732 / NBRC 1130 / NCYC 568 / NRRL Y-229).